The primary structure comprises 459 residues: ATP-dependent protease ATPase subunit HslU (459 aa).

ATP contacts are provided by residues V18, G60–E65, D272, E337, and R409.

Belongs to the ClpX chaperone family. HslU subfamily. As to quaternary structure, a double ring-shaped homohexamer of HslV is capped on each side by a ring-shaped HslU homohexamer. The assembly of the HslU/HslV complex is dependent on binding of ATP.

The protein resides in the cytoplasm. Its function is as follows. ATPase subunit of a proteasome-like degradation complex; this subunit has chaperone activity. The binding of ATP and its subsequent hydrolysis by HslU are essential for unfolding of protein substrates subsequently hydrolyzed by HslV. HslU recognizes the N-terminal part of its protein substrates and unfolds these before they are guided to HslV for hydrolysis. The protein is ATP-dependent protease ATPase subunit HslU of Thermoanaerobacter sp. (strain X514).